The following is a 454-amino-acid chain: tRNA(Ile)-lysidine synthase (454 aa).

27–32 (SGGSDS) serves as a coordination point for ATP.

Belongs to the tRNA(Ile)-lysidine synthase family.

The protein localises to the cytoplasm. It carries out the reaction cytidine(34) in tRNA(Ile2) + L-lysine + ATP = lysidine(34) in tRNA(Ile2) + AMP + diphosphate + H(+). Ligates lysine onto the cytidine present at position 34 of the AUA codon-specific tRNA(Ile) that contains the anticodon CAU, in an ATP-dependent manner. Cytidine is converted to lysidine, thus changing the amino acid specificity of the tRNA from methionine to isoleucine. This Mesorhizobium japonicum (strain LMG 29417 / CECT 9101 / MAFF 303099) (Mesorhizobium loti (strain MAFF 303099)) protein is tRNA(Ile)-lysidine synthase.